The primary structure comprises 410 residues: Mating-type locus allele B4 protein (410 aa).

The variable domain between B alleles stretch occupies residues 1-110; the sequence is MSSDPKISIT…ANASSPVVGC (110 aa). Positions 107–184 form a DNA-binding region, homeobox; TALE-type; that stretch reads VVGCRELSED…NARRRSGWSH (78 aa). The interval 111 to 410 is highly conserved between B alleles; the sequence is RELSEDLPAY…PFLCLSVAFV (300 aa). Disordered stretches follow at residues 202–241, 278–335, and 375–394; these read RAKLSSSNQSTPPSPTSEYPSNNLDDFLSDNLGRPLTPAD, TPKP…TPEL, and RGNRKVKALPKRAGKQQPDE. Low complexity predominate over residues 206-222; that stretch reads SSSNQSTPPSPTSEYPS. The Nuclear localization signal signature appears at 276 to 308; it reads KKTPKPGMPRPVTTVAKRQPARKTKPAAKPKSR. Basic residues predominate over residues 294–307; that stretch reads QPARKTKPAAKPKS. Residues 312 to 335 are compositionally biased toward polar residues; it reads PRASTTPSIDSTLDSSKLESTPEL. The not essential for B4 function stretch occupies residues 333–410; the sequence is PELSMCSTAD…PFLCLSVAFV (78 aa). The span at 375-388 shows a compositional bias: basic residues; that stretch reads RGNRKVKALPKRAG.

Belongs to the TALE/M-ATYP homeobox family.

The protein localises to the nucleus. Its function is as follows. The B locus has at least 25 alleles, and any combination of two different B alleles yields a multimeric regulatory protein, that activates genes responsible for the pathogenicity and for the sexual development of the fungus within the corn plant. The polypeptide is Mating-type locus allele B4 protein (Mycosarcoma maydis (Corn smut fungus)).